A 222-amino-acid polypeptide reads, in one-letter code: Probable nicotinate-nucleotide adenylyltransferase (222 aa).

The protein belongs to the NadD family.

The enzyme catalyses nicotinate beta-D-ribonucleotide + ATP + H(+) = deamido-NAD(+) + diphosphate. The protein operates within cofactor biosynthesis; NAD(+) biosynthesis; deamido-NAD(+) from nicotinate D-ribonucleotide: step 1/1. Functionally, catalyzes the reversible adenylation of nicotinate mononucleotide (NaMN) to nicotinic acid adenine dinucleotide (NaAD). The protein is Probable nicotinate-nucleotide adenylyltransferase of Stenotrophomonas maltophilia (strain K279a).